Reading from the N-terminus, the 204-residue chain is Probable molybdenum cofactor guanylyltransferase (204 aa).

Residues 10–12 (LSG), K22, D75, and D104 contribute to the GTP site. D104 provides a ligand contact to Mg(2+).

This sequence belongs to the MobA family. The cofactor is Mg(2+).

It localises to the cytoplasm. It catalyses the reaction Mo-molybdopterin + GTP + H(+) = Mo-molybdopterin guanine dinucleotide + diphosphate. Functionally, transfers a GMP moiety from GTP to Mo-molybdopterin (Mo-MPT) cofactor (Moco or molybdenum cofactor) to form Mo-molybdopterin guanine dinucleotide (Mo-MGD) cofactor. The protein is Probable molybdenum cofactor guanylyltransferase of Methanocaldococcus jannaschii (strain ATCC 43067 / DSM 2661 / JAL-1 / JCM 10045 / NBRC 100440) (Methanococcus jannaschii).